Consider the following 2555-residue polypeptide: MTAITHGSPVGGNDSQGQVLDGQSQHLFQQNQTSSPDSSNENSVATPPPEEQGQGDAPPQHEDEEPAFPHTELANLDDMINRPRWVVPVLPKGELEVLLEAAIDLSVKGLDVKSEACQRFFRDGLTISFTKILMDEAVSGWKFEIHRCIINNTHRLVELCVAKLSQDWFPLLELLAMALNPHCKFHIYNGTRPCELISSNAQLPEDELFARSSDPRSPKGWLVDLINKFGTLNGFQILHDRFFNGSALNIQIIAALIKPFGQCYEFLSQHTLKKYFIPVIEIVPHLLENLTDEELKKEAKNEAKNDALSMIIKSLKNLASRISGQDETIKNLEIFRLKMILRLLQISSFNGKMNALNEINKVISSVSYYTHRHSNPEEEEWLTAERMAEWIQQNNILSIVLQDSLHQPQYVEKLEKILRFVIKEKALTLQDLDNIWAAQAGKHEAIVKNVHDLLAKLAWDFSPGQLDHLFDCFKASWTNASKKQREKLLELIRRLAEDDKDGVMAHKVLNLLWNLAQSDDVPVDIMDLALSAHIKILDYSCSQDRDAQKIQWIDHFIEELRTNDKWVIPALKQIREICSLFGEASQNLSQTQRSPHIFYRHDLINQLQQNHALVTLVAENLATYMNSIRLYAGDHEDYDPQTVRLGSRYSHVQEVQERLNFLRFLLKDGQLWLCAPQAKQIWKCLAENAVYLCDREACFKWYSKLMGDEPDLDPDINKDFFESNVLQLDPSLLTENGMKCFERFFKAVNCRERKLIAKRRSYMMDDLELIGLDYLWRVVIQSSDEIANRAIDLLKEIYTNLGPRLKANQVVIHEDFIQSCFDRLKASYDTLCVFDGDKNSINCARQEAIRMVRVLTVIKEYINECDSDYHKERMILPMSRAFRGKHLSLIVRFPNQGRQVDELDIWSHTNDTIGSVRRCIVNRIKANVAHKKIELFVGGELIDSEDDRKLIGQLNLKDKSLITAKLTQINFNMPSSPDSSSDSSTASPGNHRNHYNDGPNLEVESCLPGVIMSVHPRYISFLWQVADLGSNLNMPPLRDGARVLMKLMPPDRTAVEKLRAVCLDHAKLGEGKLSPPLDSLFFGPSASQVLYLTEVVYALLMPAGVPLTDGSSDFQVHFLKSGGLPLVLSMLIRNNFLPNTDMETRRGAYLNALKIAKLLLTAIGYGHVRAVAEACQPVVDGTDPITQINQVTHDQAVVLQSALQSIPNPSSECVLRNESILLAQEISNEASRYMPDICVIRAIQKIIWASACGALGLVFSPNEEITKIYQMTTNGSNKLEVEDEQVCCEALEVMTLCFALLPTALDALSKEKAWQTFIIDLLLHCPSKTVRQLAQEQFFLMCTRCCMGHRPLLFFITLLFTILGSTAREKGKYSGDYFTLLRHLLNYAYNGNINIPNAEVLLVSEIDWLKRIRDNVKNTGETGVEEPILEGHLGVTKELLAFQTSEKKYHFGCEKGGANLIKELIDDFIFPASKVYLQYLRSGELPAEQAIPVCSSPVTINAGFELLVALAIGCVRNLKQIVDCLTEMYYMGTAITTCEALTEWEYLPPVGPRPPKGFVGLKNAGATCYMNSVIQQLYMIPSIRNSILAIEGTGSDLHDDMFGDEKQDSESNVDPRDDVFGYPHQFEDKPALSKTEDRKEYNIGVLRHLQVIFGHLAASQLQYYVPRGFWKQFRLWGEPVNLREQHDALEFFNSLVDSLDEALKALGHPAILSKVLGGSFADQKICQGCPHRYECEESFTTLNVDIRNHQNLLDSLEQYIKGDLLEGANAYHCEKCDKKVDTVKRLLIKKLPRVLAIQLKRFDYDWERECAIKFNDYFEFPRELDMGPYTVAGVANLERDNVNSENELIEQKEQSDNETAGGTKYRLVGVLVHSGQASGGHYYSYIIQRNGKDDQTDHWYKFDDGDVTECKMDDDEEMKNQCFGGEYMGEVFDHMMKRMSYRRQKRWWNAYILFYEQMDMIDEDDEMIRYISELTIARPHQIIMSPAIERSVRKQNVKFMHNRLQYSLEYFQFVKKLLTCNGVYLNPAPGQDYLLPEAEEITMISIQLAARFLFTTGFHTKKIVRGPASDWYDALCVLLRHSKNVRFWFTHNVLFNVSNRFSEYLLECPSAEVRGAFAKLIVFIAHFSLQDGSCPSPFASPGPSSQACDNLSLSDHLLRATLNLLRREVSEHGHHLQQYFNLFVMYANLGVAEKTQLLKLNVPATFMLVSLDEGPGPPIKYQYAELGKLYSVVSQLIRCCNVSSTMQSSINGNPPLPNPFGDLNLSQPIMPIQQNVLDILFVRTSYVKKIIEDCSNSEDTIKLLRFCSWENPQFSSTVLSELLWQVAYSYTYELRPYLDLLFQILLIEDSWQTHRIHNALKGIPDDRDGLFDTIQRSKNHYQKRAYQCIKCMVALFSSCPVAYQILQGNGDLKRKWTWAVEWLGDELERRPYTGNPQYSYNNWSPPVQSNETANGYFLERSHSARMTLAKACELCPEEEPDDQDAPDEHEPSPSEDAPLYPHSPASQYQQNNHVHGQPYTGPAAHHLNNPQKTGQRTQENYEGNEEVSSPQMKDQ.

The disordered stretch occupies residues 1-66; sequence MTAITHGSPV…APPQHEDEEP (66 aa). Residues 13–45 are compositionally biased toward polar residues; sequence NDSQGQVLDGQSQHLFQQNQTSSPDSSNENSVA. The residue at position 589 (Ser589) is a Phosphoserine. Thr591 carries the post-translational modification Phosphothreonine. A disordered region spans residues 972-997; the sequence is NMPSSPDSSSDSSTASPGNHRNHYND. A compositionally biased stretch (low complexity) spans 974-984; sequence PSSPDSSSDSS. A USP domain is found at 1559-1958; the sequence is VGLKNAGATC…NAYILFYEQM (400 aa). The active-site Nucleophile is the Cys1568. Positions 1729, 1731, 1773, and 1776 each coordinate Zn(2+). The active-site Proton acceptor is the His1881. A Phosphoserine modification is found at Ser2444. Positions 2476 to 2485 are enriched in acidic residues; it reads PEEEPDDQDA. A disordered region spans residues 2476-2555; sequence PEEEPDDQDA…EVSSPQMKDQ (80 aa). Polar residues-rich tracts occupy residues 2504–2514 and 2528–2555; these read PASQYQQNNHV and NNPQKTGQRTQENYEGNEEVSSPQMKDQ. A Phosphotyrosine modification is found at Tyr2541. Ser2548 carries the post-translational modification Phosphoserine.

This sequence belongs to the peptidase C19 family. In terms of tissue distribution, widely expressed in embryonic and adult tissues.

The enzyme catalyses Thiol-dependent hydrolysis of ester, thioester, amide, peptide and isopeptide bonds formed by the C-terminal Gly of ubiquitin (a 76-residue protein attached to proteins as an intracellular targeting signal).. It participates in protein modification; protein ubiquitination. Functionally, deubiquitinase that mediates deubiquitination of target proteins. May stabilize target proteins that are important for male germ cell development. The protein is Ubiquitin carboxyl-terminal hydrolase 9Y of Homo sapiens (Human).